The primary structure comprises 109 residues: uncharacterized protein (109 aa).

To A.calcoaceticus putative ferredoxin.

This is an uncharacterized protein from Escherichia coli O157:H7.